The sequence spans 357 residues: Transcription factor PCF6 (357 aa).

The segment at 1–29 (MEAAVGDGEGGGGGGGRGKRGRGGGGGEM) is disordered. Over residues 7–16 (DGEGGGGGGG) the composition is skewed to gly residues. Residues 52–110 (GKDRHSKVYTAKGIRDRRVRLSVATAIQFYDLQDRLGFDQPSKAIEWLINAASPAIDTL) enclose the TCP domain. Disordered regions lie at residues 125-162 (AADAAPTRRRSQQQQQQLSNKSGCSSTSETSKGSDKEV) and 281-307 (ANRGTLQSNSPSNMSGHHHHHHQQQLQ). 2 stretches are compositionally biased toward polar residues: residues 142-155 (LSNKSGCSSTSETS) and 284-295 (GTLQSNSPSNMS).

In terms of assembly, forms homodimers and heterodimers.

The protein localises to the nucleus. Functionally, transcription activator. Binds the promoter core sequence 5'-GGNCC-3'. This Oryza sativa subsp. japonica (Rice) protein is Transcription factor PCF6 (PCF6).